The sequence spans 311 residues: NAD kinase (311 aa).

The Proton acceptor role is filled by aspartate 89. NAD(+) is bound by residues 89-90 (DG), arginine 94, 163-164 (NE), aspartate 193, and 204-209 (TAYAFS).

It belongs to the NAD kinase family. A divalent metal cation is required as a cofactor.

Its subcellular location is the cytoplasm. It carries out the reaction NAD(+) + ATP = ADP + NADP(+) + H(+). Functionally, involved in the regulation of the intracellular balance of NAD and NADP, and is a key enzyme in the biosynthesis of NADP. Catalyzes specifically the phosphorylation on 2'-hydroxyl of the adenosine moiety of NAD to yield NADP. This Mycobacterium leprae (strain Br4923) protein is NAD kinase.